Consider the following 239-residue polypeptide: tRNA (guanine-N(7)-)-methyltransferase (239 aa).

S-adenosyl-L-methionine-binding residues include Glu69, Glu94, Asp121, and Asp144. The active site involves Asp144. Lys148 is a binding site for substrate. An interaction with RNA region spans residues 150 to 155 (RHNKRR). Residues Asp180 and 217–220 (TKFE) each bind substrate.

It belongs to the class I-like SAM-binding methyltransferase superfamily. TrmB family. Monomer.

The catalysed reaction is guanosine(46) in tRNA + S-adenosyl-L-methionine = N(7)-methylguanosine(46) in tRNA + S-adenosyl-L-homocysteine. It functions in the pathway tRNA modification; N(7)-methylguanine-tRNA biosynthesis. Catalyzes the formation of N(7)-methylguanine at position 46 (m7G46) in tRNA. The sequence is that of tRNA (guanine-N(7)-)-methyltransferase from Salmonella typhi.